The sequence spans 98 residues: Sarcosine oxidase subunit delta (98 aa).

The Zn(2+) site is built by Cys-6, Cys-9, His-59, and Cys-63.

This sequence belongs to the SoxD family. In terms of assembly, heterotetramer composed of subunits alpha (SoxA), beta (SoxB), gamma (SoxG) and delta (SoxD).

The protein resides in the cytoplasm. The catalysed reaction is sarcosine + (6S)-5,6,7,8-tetrahydrofolate + O2 = (6R)-5,10-methylene-5,6,7,8-tetrahydrofolate + glycine + H2O2. It catalyses the reaction sarcosine + O2 + H2O = formaldehyde + glycine + H2O2. In terms of biological role, in the presence of tetrahydrofolate, catalyzes the oxidative demethylation of sarcosine to yield glycine, 5,10-methylenetetrahydrofolate and hydrogen peroxide. In the absence of tetrahydrofolate, catalyzes the oxidative demethylation of sarcosine to yield glycine, formaldehyde and hydrogen peroxide. This Corynebacterium sp. (strain P-1) protein is Sarcosine oxidase subunit delta.